The following is a 529-amino-acid chain: Plexin domain-containing protein 2 (529 aa).

Residues 1–30 (MARFPKADLAAAGVMLLCHFFTDQFQFADG) form the signal peptide. Topologically, residues 31–454 (KPGDQILDWQ…AEKKGGTLHA (424 aa)) are extracellular. The tract at residues 80–104 (ASVGQDSPEPRSFTDLLLDDGQDNN) is disordered. Asn103 and Asn160 each carry an N-linked (GlcNAc...) asparagine glycan. In terms of domain architecture, PSI spans 327-372 (TCLQFNRCGPCVSSQIGFNCSWCSKLQRCSSGFDRHRQDWVDSGCP). Residues 455 to 475 (GLIIGILILVLIVATAILVTV) traverse the membrane as a helical segment. Residues 476-529 (YMYHHPTSAASIFFIERRPSRWPAMKFRRGSGHPAYAEVEPVGEKEGFIVSEQC) are Cytoplasmic-facing. Ser506 carries the post-translational modification Phosphoserine.

It belongs to the plexin family. Interacts with CTTN. As to expression, expressed in the endothelial cells of the stroma but not in the endothelial cells of normal colonic tissue.

It localises to the membrane. Its function is as follows. May play a role in tumor angiogenesis. This is Plexin domain-containing protein 2 (PLXDC2) from Homo sapiens (Human).